The following is a 306-amino-acid chain: MERSLKKTKNNYNNSIKSNLMKDDELFHVIHKVPCGDTPYVRAKHAQLIEKNPEMAIVWFWKAINTGDRVDSALKDMAVVMKQLDRSEEAIEAIKSFRPRCSKNSQDSLDNVLIDLYKKCGRMEEQVELLKRKLRQIYQGEAFNGKPTKTARSHGKKFQVTVQQEISRLLGNLGWAYMQQAKYLSAEAVYRKAQMVEPDANKSCNLAMCLIKQGRFEEGRLVLDDVLEYRVLGADDCRTRQRAEELLSELESSLPRMRDAEMEDVLGNILDDDFVLGLEEMTSTSFKSKRLPIFEQISSFRNTLVC.

5 TPR repeats span residues 1–22 (MERS…NLMK), 71–104 (DSAL…CSKN), 107–140 (DSLD…IYQG), 167–200 (SRLL…EPDA), and 202–233 (KSCN…RVLG). Positions 72–139 (SALKDMAVVM…LKRKLRQIYQ (68 aa)) form a coiled coil. A coiled-coil region spans residues 238 to 260 (RTRQRAEELLSELESSLPRMRDA). Residues 270 to 304 (LDDDFVLGLEEMTSTSFKSKRLPIFEQISSFRNTL) form a TPR 6 repeat.

It belongs to the MS5 protein family.

Its subcellular location is the nucleus. In terms of biological role, involved in the utilization of stored sulfate under sulfur-deficient conditions. The chain is Protein SULFUR DEFICIENCY-INDUCED 1 from Arabidopsis thaliana (Mouse-ear cress).